The primary structure comprises 429 residues: Argininosuccinate lyase (429 aa).

Belongs to the lyase 1 family. Argininosuccinate lyase subfamily.

The protein resides in the cytoplasm. The enzyme catalyses 2-(N(omega)-L-arginino)succinate = fumarate + L-arginine. It participates in amino-acid biosynthesis; L-arginine biosynthesis; L-arginine from L-ornithine and carbamoyl phosphate: step 3/3. The polypeptide is Argininosuccinate lyase (Pyrobaculum calidifontis (strain DSM 21063 / JCM 11548 / VA1)).